The following is a 609-amino-acid chain: Phosphoenolpyruvate carboxykinase [GTP] (609 aa).

Residues Arg81 and 220–222 (YGG) each bind substrate. Mn(2+) is bound by residues Lys229 and His249. Ser271 is a substrate binding site. 272–277 (ACGKTN) lines the GTP pocket. Residue Cys273 is part of the active site. Asp296 contributes to the Mn(2+) binding site. Residue 387–389 (NSR) participates in substrate binding. GTP contacts are provided by residues Arg389, Arg420, and 515–518 (FGEN).

The protein belongs to the phosphoenolpyruvate carboxykinase [GTP] family. As to quaternary structure, monomer. The cofactor is Mn(2+).

The protein localises to the cytoplasm. The enzyme catalyses oxaloacetate + GTP = phosphoenolpyruvate + GDP + CO2. It participates in carbohydrate biosynthesis; gluconeogenesis. Catalyzes the conversion of oxaloacetate (OAA) to phosphoenolpyruvate (PEP), the rate-limiting step in the metabolic pathway that produces glucose from lactate and other precursors derived from the citric acid cycle. The sequence is that of Phosphoenolpyruvate carboxykinase [GTP] from Mycobacterium leprae (strain Br4923).